A 1323-amino-acid polypeptide reads, in one-letter code: Sister chromatid cohesion protein PDS5 homolog A-A (1323 aa).

Residues 385–421 (FLVNDQLLGFVRERTLDKRWRVRKEAMMGLAQLYKKY) form an HEAT repeat. The tract at residues 1139-1323 (LNATGRRPYS…TAQRQIDLHR (185 aa)) is disordered. The span at 1153–1165 (SEISNNVSINSES) shows a compositional bias: low complexity. Polar residues-rich tracts occupy residues 1166–1176 (DASVANRQSSE) and 1210–1220 (LDQTAPSNTGT). Residues 1235–1246 (NIRKESEEKKAD) are compositionally biased toward basic and acidic residues.

As to quaternary structure, interacts with the cohesin complex. Binds chromatin in a cohesin-dependent manner.

The protein resides in the nucleus. May regulate sister chromatid cohesion during mitosis and couple it to DNA replication. In Xenopus laevis (African clawed frog), this protein is Sister chromatid cohesion protein PDS5 homolog A-A (pds5a-a).